The primary structure comprises 141 residues: Proteasome maturation protein (141 aa).

Residue K39 forms a Glycyl lysine isopeptide (Lys-Gly) (interchain with G-Cter in SUMO2) linkage. The short motif at 68-72 is the High-affinity association with the preproteasome element; the sequence is RNIQG.

The protein belongs to the POMP/UMP1 family. Constituent of preproteasomes, but not of mature 20S proteasomes. Within the preproteasome, may directly interact with PSMB1/beta6, PSMB4/beta7, PSMB5/beta5, PSMB6/beta1 and PSMB9/beta1i. Interaction with PSMB8/beta5i has been observed in PubMed:10973495, but not in PubMed:10926487. Forms tetramers. In terms of tissue distribution, strongly expressed from the basal layer to the granular layer of healthy epidermis, whereas in KLICK patients there is a gradual decrease of expression toward the granular layer.

The protein localises to the cytoplasm. It is found in the cytosol. The protein resides in the nucleus. Its subcellular location is the microsome membrane. Its function is as follows. Molecular chaperone essential for the assembly of standard proteasomes and immunoproteasomes. Degraded after completion of proteasome maturation. Mediates the association of 20S preproteasome with the endoplasmic reticulum. The chain is Proteasome maturation protein from Homo sapiens (Human).